A 284-amino-acid polypeptide reads, in one-letter code: uncharacterized protein (284 aa).

Positions 1 to 23 (MKRGCAIAVMICGLITSVSAASA) are cleaved as a signal peptide.

The protein belongs to the surface antigen msp4 family.

This is an uncharacterized protein from Brucella melitensis biotype 1 (strain ATCC 23456 / CCUG 17765 / NCTC 10094 / 16M).